We begin with the raw amino-acid sequence, 561 residues long: DNA ligase B (561 aa).

The active-site N6-AMP-lysine intermediate is the K125.

The protein belongs to the NAD-dependent DNA ligase family. LigB subfamily.

It catalyses the reaction NAD(+) + (deoxyribonucleotide)n-3'-hydroxyl + 5'-phospho-(deoxyribonucleotide)m = (deoxyribonucleotide)n+m + AMP + beta-nicotinamide D-nucleotide.. Functionally, catalyzes the formation of phosphodiester linkages between 5'-phosphoryl and 3'-hydroxyl groups in double-stranded DNA using NAD as a coenzyme and as the energy source for the reaction. This is DNA ligase B from Salmonella agona (strain SL483).